The sequence spans 624 residues: MFHGTVTEELTSHEEWSHYNENIREGQKDFVFVKFNGLHLKSMENLQSCISLRVCIFSNNFITDIHPLQSCIKLIKLDLHGNQIKSLPNTKFWNGLKNLKLLYLHDNGFAKLKNICVLSACPTLIALTMFDCPVSLKKGYRHVLVNSIWPLKALDHHVISDEEIIQNWHLPERFKACNHRLFFNFCPALRKGTTYEEEINNIKHITSKINAILAHNSPVLIVQRWIRGFLVRKNLSPVFFHKKKQQEKIIRGYEAKWIYITKGYEDKLLKDLFFKPETNIKGKLAYWKHNIYYPVDLKNSSEHRKHVSSILCELKPKDLGMKSKTSRHLIQKGQESEDEIVDEKLDTSFRISVFKLPIYTSGSLKNNAVLREKKQHFFPAYPQPIYTTHPKPIIKKDIRLERSMKEFFAPQRAGMKLRTFSDIDKYYTEQKKQEYHKEKVRVVAMAQVARERVRVAVNEHLNQKKYATQKLIEENKETIQNSLRQVWQNRFNYLEKARERKALFLKEKSQKASERLLVQNLNNERTLLTRGLLKIDRLEKNEAVLKEKSLIVKQKLKAEKYRKNLLKEMKKVRSQEIYKRHCEEKFVMDMIAFEKACERLQDAKTKVAIVKTNLDFKVPNGLIK.

3 LRR repeats span residues 51–72, 73–94, and 98–119; these read SLRV…QSCI, KLIK…KFWN, and NLKL…CVLS. Residues 132–179 enclose the LRRCT domain; it reads CPVSLKKGYRHVLVNSIWPLKALDHHVISDEEIIQNWHLPERFKACNH. Residues 215–244 enclose the IQ domain; sequence HNSPVLIVQRWIRGFLVRKNLSPVFFHKKK. The stretch at 553 to 614 forms a coiled coil; sequence KQKLKAEKYR…TKVAIVKTNL (62 aa).

This is Leucine-rich repeat and IQ domain-containing protein 3 (LRRIQ3) from Homo sapiens (Human).